Reading from the N-terminus, the 418-residue chain is Glucose-1-phosphate adenylyltransferase (418 aa).

Residues Tyr-104, Gly-169, 184 to 185, and Ser-202 each bind alpha-D-glucose 1-phosphate; that span reads EK.

Belongs to the bacterial/plant glucose-1-phosphate adenylyltransferase family. As to quaternary structure, homotetramer.

The catalysed reaction is alpha-D-glucose 1-phosphate + ATP + H(+) = ADP-alpha-D-glucose + diphosphate. It participates in glycan biosynthesis; glycogen biosynthesis. Functionally, involved in the biosynthesis of ADP-glucose, a building block required for the elongation reactions to produce glycogen. Catalyzes the reaction between ATP and alpha-D-glucose 1-phosphate (G1P) to produce pyrophosphate and ADP-Glc. This chain is Glucose-1-phosphate adenylyltransferase, found in Jannaschia sp. (strain CCS1).